The primary structure comprises 956 residues: Kinesin heavy chain isoform 5C (956 aa).

Residues 8–327 (SIKVMCRFRP…LMFGQRAKTI (320 aa)) enclose the Kinesin motor domain. ATP contacts are provided by glutamine 87, serine 89, serine 90, glycine 91, lysine 92, threonine 93, histidine 94, and lysine 99. Residues 174 to 315 (VSSPEEVMDV…PSVFNEAETK (142 aa)) are microtubule-binding. Threonine 403 carries the post-translational modification Phosphothreonine. Positions 406–923 (VDGISAEKEK…RRAHSAQIAK (518 aa)) form a coiled coil. Residues 859 to 956 (CELPKLEKRL…GSSNSTHYQK (98 aa)) are globular. The interval 910 to 956 (KNMARRAHSAQIAKPIRPGHYPASSPTAVHAVRGGGGGSSNSTHYQK) is disordered.

This sequence belongs to the TRAFAC class myosin-kinesin ATPase superfamily. Kinesin family. Kinesin subfamily. Oligomer composed of two heavy chains and two light chains. Interacts with GRIP1. Interacts with KLC3 and TRAK1. Interacts with ZFYVE27.

Its subcellular location is the cytoplasm. It is found in the cytoskeleton. The protein localises to the cell projection. The protein resides in the dendrite. It catalyses the reaction ATP + H2O = ADP + phosphate + H(+). In terms of biological role, microtubule-associated force-producing protein that may play a role in organelle transport. Has ATPase activity. Involved in synaptic transmission. Mediates dendritic trafficking of mRNAs. Required for anterograde axonal transportation of MAPK8IP3/JIP3 which is essential for MAPK8IP3/JIP3 function in axon elongation. The chain is Kinesin heavy chain isoform 5C (Kif5c) from Mus musculus (Mouse).